The sequence spans 1252 residues: DNA-directed RNA polymerase subunit beta (1252 aa).

Belongs to the RNA polymerase beta chain family. As to quaternary structure, the RNAP catalytic core consists of 2 alpha, 1 beta, 1 beta' and 1 omega subunit. When a sigma factor is associated with the core the holoenzyme is formed, which can initiate transcription.

The enzyme catalyses RNA(n) + a ribonucleoside 5'-triphosphate = RNA(n+1) + diphosphate. DNA-dependent RNA polymerase catalyzes the transcription of DNA into RNA using the four ribonucleoside triphosphates as substrates. The polypeptide is DNA-directed RNA polymerase subunit beta (Chlamydia pneumoniae (Chlamydophila pneumoniae)).